We begin with the raw amino-acid sequence, 422 residues long: 26S proteasome non-ATPase regulatory subunit 11 (422 aa).

The 169-residue stretch at Asp224–Pro392 folds into the PCI domain.

Belongs to the proteasome subunit S9 family. In terms of assembly, component of the 19S proteasome regulatory particle complex. The 26S proteasome consists of a 20S core particle (CP) and two 19S regulatory subunits (RP). The regulatory particle is made of a lid composed of 9 subunits including PSMD11, a base containing 6 ATPases and few additional components.

It is found in the nucleus. It localises to the cytoplasm. Its subcellular location is the cytosol. Component of the 26S proteasome, a multiprotein complex involved in the ATP-dependent degradation of ubiquitinated proteins. This complex plays a key role in the maintenance of protein homeostasis by removing misfolded or damaged proteins, which could impair cellular functions, and by removing proteins whose functions are no longer required. Therefore, the proteasome participates in numerous cellular processes, including cell cycle progression, apoptosis, or DNA damage repair. In the complex, PSMD11 is required for proteasome assembly. Plays a key role in increased proteasome activity in embryonic stem cells (ESCs): its high expression in ESCs promotes enhanced assembly of the 26S proteasome, followed by higher proteasome activity. This chain is 26S proteasome non-ATPase regulatory subunit 11 (psmd11), found in Xenopus tropicalis (Western clawed frog).